Consider the following 469-residue polypeptide: Proline--tRNA ligase (469 aa).

Belongs to the class-II aminoacyl-tRNA synthetase family. ProS type 3 subfamily. As to quaternary structure, homodimer.

It localises to the cytoplasm. It catalyses the reaction tRNA(Pro) + L-proline + ATP = L-prolyl-tRNA(Pro) + AMP + diphosphate. Catalyzes the attachment of proline to tRNA(Pro) in a two-step reaction: proline is first activated by ATP to form Pro-AMP and then transferred to the acceptor end of tRNA(Pro). The protein is Proline--tRNA ligase of Methanobrevibacter smithii (strain ATCC 35061 / DSM 861 / OCM 144 / PS).